We begin with the raw amino-acid sequence, 149 residues long: Large ribosomal subunit protein uL11 (149 aa).

The protein belongs to the universal ribosomal protein uL11 family. As to quaternary structure, part of the ribosomal stalk of the 50S ribosomal subunit. Interacts with L10 and the large rRNA to form the base of the stalk. L10 forms an elongated spine to which L12 dimers bind in a sequential fashion forming a multimeric L10(L12)X complex. Post-translationally, one or more lysine residues are methylated.

Forms part of the ribosomal stalk which helps the ribosome interact with GTP-bound translation factors. The protein is Large ribosomal subunit protein uL11 of Xanthobacter autotrophicus (strain ATCC BAA-1158 / Py2).